Here is a 397-residue protein sequence, read N- to C-terminus: SEC14-like protein 6 (397 aa).

The 174-residue stretch at 76 to 249 (PPEVVRLYNA…EFGGTMTDPD (174 aa)) folds into the CRAL-TRIO domain. The GOLD domain occupies 252–383 (PKCLTKINYG…SKRISYTVEV (132 aa)).

The polypeptide is SEC14-like protein 6 (SEC14L6) (Homo sapiens (Human)).